The chain runs to 116 residues: NADH-quinone oxidoreductase subunit A (116 aa).

3 consecutive transmembrane segments (helical) span residues 3–23 (FTFL…VIAL), 61–81 (FAIL…WAVV), and 88–108 (QGLV…AYAW).

It belongs to the complex I subunit 3 family. As to quaternary structure, NDH-1 is composed of 14 different subunits. Subunits NuoA, H, J, K, L, M, N constitute the membrane sector of the complex.

It is found in the cell inner membrane. It catalyses the reaction a quinone + NADH + 5 H(+)(in) = a quinol + NAD(+) + 4 H(+)(out). In terms of biological role, NDH-1 shuttles electrons from NADH, via FMN and iron-sulfur (Fe-S) centers, to quinones in the respiratory chain. The immediate electron acceptor for the enzyme in this species is believed to be a menaquinone. Couples the redox reaction to proton translocation (for every two electrons transferred, four hydrogen ions are translocated across the cytoplasmic membrane), and thus conserves the redox energy in a proton gradient. This Bacteroides thetaiotaomicron (strain ATCC 29148 / DSM 2079 / JCM 5827 / CCUG 10774 / NCTC 10582 / VPI-5482 / E50) protein is NADH-quinone oxidoreductase subunit A.